The primary structure comprises 421 residues: Glutamate-1-semialdehyde 2,1-aminomutase 1 (421 aa).

Position 258 is an N6-(pyridoxal phosphate)lysine (K258).

The protein belongs to the class-III pyridoxal-phosphate-dependent aminotransferase family. HemL subfamily. It depends on pyridoxal 5'-phosphate as a cofactor.

The protein localises to the cytoplasm. The catalysed reaction is (S)-4-amino-5-oxopentanoate = 5-aminolevulinate. Its pathway is porphyrin-containing compound metabolism; protoporphyrin-IX biosynthesis; 5-aminolevulinate from L-glutamyl-tRNA(Glu): step 2/2. This chain is Glutamate-1-semialdehyde 2,1-aminomutase 1, found in Cenarchaeum symbiosum (strain A).